The primary structure comprises 299 residues: tRNA dimethylallyltransferase (299 aa).

Residue 10-17 coordinates ATP; that stretch reads GPTAVGKT. 12–17 is a binding site for substrate; it reads TAVGKT. Positions 35-38 are interaction with substrate tRNA; it reads DSQQ.

It belongs to the IPP transferase family. Monomer. Mg(2+) is required as a cofactor.

The enzyme catalyses adenosine(37) in tRNA + dimethylallyl diphosphate = N(6)-dimethylallyladenosine(37) in tRNA + diphosphate. Its function is as follows. Catalyzes the transfer of a dimethylallyl group onto the adenine at position 37 in tRNAs that read codons beginning with uridine, leading to the formation of N6-(dimethylallyl)adenosine (i(6)A). The protein is tRNA dimethylallyltransferase of Streptococcus thermophilus (strain ATCC BAA-250 / LMG 18311).